Reading from the N-terminus, the 164-residue chain is Ribosome maturation factor RimM (164 aa).

One can recognise a PRC barrel domain in the interval 90 to 161 (KGSYFIADLI…TVTIKPLEIW (72 aa)).

Belongs to the RimM family. As to quaternary structure, binds ribosomal protein uS19.

It is found in the cytoplasm. In terms of biological role, an accessory protein needed during the final step in the assembly of 30S ribosomal subunit, possibly for assembly of the head region. Essential for efficient processing of 16S rRNA. May be needed both before and after RbfA during the maturation of 16S rRNA. It has affinity for free ribosomal 30S subunits but not for 70S ribosomes. This chain is Ribosome maturation factor RimM, found in Clostridium botulinum (strain ATCC 19397 / Type A).